The chain runs to 334 residues: DGAT1/2-independent enzyme synthesizing storage lipids (334 aa).

Residues 1–50 (MTNKNQSFGVGQDSMSSMTCLIHVLEAWFGVEHLEDYWNFANYLLWVFTP) are Lumenal-facing. The N-linked (GlcNAc...) asparagine glycan is linked to N5. Residues 51 to 71 (LLLLILPYFTIFLLYLTIIFL) traverse the membrane as a helical segment. The Cytoplasmic segment spans residues 72–125 (HIYKRKNVLKEAYSHNLWDGARKTVATLWDGHAAVWHGYEVHGMEKIPEEGPAL). A helical transmembrane segment spans residues 126–146 (IIFYHGAIPIDFYYFMAKIFI). The active site involves H130. At 147 to 334 (HKGRTCRVVA…NKQKINQKTL (188 aa)) the chain is on the lumenal side.

This sequence belongs to the diacylglycerol acyltransferase family. Highly divergent.

The protein localises to the endoplasmic reticulum membrane. The enzyme catalyses a 1,2-diacylglycerol + a 1,2-diacyl-sn-glycero-3-phosphocholine = a triacylglycerol + a 1-acyl-sn-glycero-3-phosphocholine. The catalysed reaction is a 1-O-alkyl-2-acyl-sn-glycero-3-phosphocholine + a 1,2-diacylglycerol = a 1-O-alkyl-sn-glycero-3-phosphocholine + a triacylglycerol. It carries out the reaction a 2-acylglycerol + an acyl-CoA = a 1,2-diacylglycerol + CoA. It catalyses the reaction an acyl-CoA + a 1,2-diacyl-sn-glycerol = a triacyl-sn-glycerol + CoA. The enzyme catalyses 2-(9Z-octadecenoyl)-glycerol + (9Z)-octadecenoyl-CoA = 1,2-di-(9Z-octadecenoyl)-glycerol + CoA. The catalysed reaction is 1,2-di-(9Z-octadecenoyl)-sn-glycerol + (9Z)-octadecenoyl-CoA = 1,2,3-tri-(9Z-octadecenoyl)-glycerol + CoA. With respect to regulation, acyltransferase activity is specifically inhibited by TMX1 at the endoplasmic reticulum, restricting accumulation of triacylglycerol. Functionally, catalytic subunit of the alternative triglyceride biosynthesis pathway, which mediates formation of triacylglycerol from diacylglycerol and membrane phospholipids. Synthesizes triacylglycerol at the expense of membrane phospholipids, such as phosphatidylcholine (PC) and its ether-linked form (ePC), thereby altering the composition of membranes. The alternative triglyceride biosynthesis pathway is probably required to provide the energy required for rapid growth when fuel sources are limiting. It maintains mitochondrial function during periods of extracellular lipid starvation. Can also use acyl-CoA as donor: acts as a acyl-CoA:monoacylglycerol acyltransferase (MGAT), but also shows acyl-CoA:diacylglycerol acyltransferase (DGAT) activity. This chain is DGAT1/2-independent enzyme synthesizing storage lipids (TMEM68), found in Bos taurus (Bovine).